Here is a 787-residue protein sequence, read N- to C-terminus: Transcription factor SOX-6 (787 aa).

A disordered region spans residues 1-46; sequence MSSKQATSPFACAADGEDAMTQDLTSREKEEGSDQHVASHLPLHPI. Positions 25–34 are enriched in basic and acidic residues; that stretch reads TSREKEEGSD. T119 bears the Phosphothreonine mark. A coiled-coil region spans residues 184–262; it reads LAEKERQLST…LLQQQIQVQG (79 aa). Positions 340 to 429 are disordered; sequence PGAKMPSTPQ…KSSIPSPIGG (90 aa). A compositionally biased stretch (polar residues) spans 352-361; that stretch reads NTAGTVSPTG. A Phosphoserine modification is found at S358. Residue T360 is modified to Phosphothreonine. Glycyl lysine isopeptide (Lys-Gly) (interchain with G-Cter in SUMO) cross-links involve residues K363 and K376. S398 and S401 each carry phosphoserine. Positions 398-420 are enriched in polar residues; the sequence is SPTSPTQNLFPASKTSPVNLPNK. Residues 580 to 648 constitute a DNA-binding region (HMG box); that stretch reads IKRPMNAFMV…IHLEKYPNYK (69 aa). Residues 712-740 show a composition bias toward polar residues; the sequence is TPSPQMTSDCSSTSASPEPSLPVIQSTYG. Residues 712–787 form a disordered region; it reads TPSPQMTSDC…NEAPEAVSAN (76 aa). Acidic residues predominate over residues 755–768; the sequence is NGEDEMEMYDDYED.

As to quaternary structure, homodimer. Interacts with DAZAP2. May interact with CENPK. In terms of processing, sumoylation inhibits the transcriptional activity.

It is found in the nucleus. It localises to the cytoplasm. Its function is as follows. Transcription factor that plays a key role in several developmental processes, including neurogenesis, chondrocytes differentiation and cartilage formation. Specifically binds the 5'-AACAAT-3' DNA motif present in enhancers and super-enhancers and promotes expression of genes important for chondrogenesis. Required for overt chondrogenesis when condensed prechondrocytes differentiate into early stage chondrocytes: SOX5 and SOX6 cooperatively bind with SOX9 on active enhancers and super-enhancers associated with cartilage-specific genes, and thereby potentiate SOX9's ability to transactivate. Not involved in precartilaginous condensation, the first step in chondrogenesis, during which skeletal progenitors differentiate into prechondrocytes. Together with SOX5, required to form and maintain a pool of highly proliferating chondroblasts between epiphyses and metaphyses, to form columnar chondroblasts, delay chondrocyte prehypertrophy but promote hypertrophy, and to delay terminal differentiation of chondrocytes on contact with ossification fronts. Binds to the proximal promoter region of the myelin protein MPZ gene, and is thereby involved in the differentiation of oligodendroglia in the developing spinal tube. Binds to the gene promoter of MBP and acts as a transcriptional repressor. The sequence is that of Transcription factor SOX-6 from Pongo abelii (Sumatran orangutan).